We begin with the raw amino-acid sequence, 469 residues long: MFLALLYLALPLADVLLSAEVSGLPGGDRLDCVKASDQCLKEQSCSTKYRTLRQCVAGKESNFSRATGLEAKDECKSAMEALKQKSLYNCRCKRGMKKEKNCLRIYWSMYQSLQGNDLLEDSPYEPVNSRLSDIFRLAPIVSVEPVLSKGNNCLDAAKACNLNDTCKRFRSAYITPCTSSTSNEICNKRKCHKALRLFFDKVPPKHSYGMLFCSCRDVACTERRRQTIVPVCSYEDREKPNCLNLQESCKKNYICRSRLADFFTNCQPESRSVSSCLKENYADCLLAYSGLIGTVMTPNYIDSSSLSVAPWCDCSNSGNDIDECRKFLNFFQDNTCLKNAIQAFGNGTDVNVWQPILPVQTTTATTTTASRLKNTGSETTNNEIPTHNDSPACANLQAQKKRKSNESVDTELCLNENAIGKDNTPGVSTSHISSENSFALPTSFYPSTPLILMTIALSLFLFLSSSVVL.

Positions 1 to 27 (MFLALLYLALPLADVLLSAEVSGLPGG) are cleaved as a signal peptide. 3 repeat units span residues 28 to 116 (DRLD…LQGN), 149 to 237 (KGNN…YEDR), and 238 to 341 (EKPN…KNAI). A disulfide bridge links Cys39 with Cys45. 2 N-linked (GlcNAc...) asparagine glycosylation sites follow: Asn62 and Asn163. 10 disulfides stabilise this stretch: Cys153-Cys213, Cys160-Cys166, Cys177-Cys191, Cys186-Cys232, Cys215-Cys220, Cys242-Cys312, Cys249-Cys255, Cys266-Cys284, Cys276-Cys336, and Cys314-Cys324. 2 N-linked (GlcNAc...) asparagine glycosylation sites follow: Asn346 and Asn405. Ser430 is lipidated: GPI-anchor amidated serine. A propeptide spans 431 to 469 (HISSENSFALPTSFYPSTPLILMTIALSLFLFLSSSVVL) (removed in mature form).

The protein belongs to the GDNFR family. Interacts with GDNF ligand and RET: forms a 2:2:2 ternary complex composed of GDNF ligand, GFRA1 and RET receptor.

Its subcellular location is the cell membrane. The protein localises to the golgi apparatus. The protein resides in the trans-Golgi network. It localises to the endosome. It is found in the multivesicular body. Coreceptor for GDNF, a neurotrophic factor that enhances survival and morphological differentiation of dopaminergic neurons and increases their high-affinity dopamine uptake. GDNF-binding leads to autophosphorylation and activation of the RET receptor. The polypeptide is GDNF family receptor alpha-1 (GFRA1) (Gallus gallus (Chicken)).